Consider the following 193-residue polypeptide: MASYLTLFISAVVVNNYVLTRFLGLCIFFGVSKNLNASVGMGMAVTSVITMSSILAWVVYHFVLIPFNLTFLKTVVFVLLIASFVQLLETIIKKQAPALYNMWGIYLLLIATNCIVLAVPILNADSNFNFLQSVVNAIGSGLGFAMAIILMASLREKLRLADVPKPLEGLGVAFILAGMLALAFLGFSGMISI.

6 consecutive transmembrane segments (helical) span residues 11–31 (AVVVNNYVLTRFLGLCIFFGV), 39–59 (VGMGMAVTSVITMSSILAWVV), 62–82 (FVLIPFNLTFLKTVVFVLLIA), 102–122 (MWGIYLLLIATNCIVLAVPIL), 134–154 (VVNAIGSGLGFAMAIILMASL), and 171–191 (GVAFILAGMLALAFLGFSGMI).

This sequence belongs to the NqrDE/RnfAE family. The complex is composed of six subunits: RnfA, RnfB, RnfC, RnfD, RnfE and RnfG.

Its subcellular location is the cell membrane. Its function is as follows. Part of a membrane-bound complex that couples electron transfer with translocation of ions across the membrane. Couples electron transfer from reduced ferredoxin to NAD(+) with translocation of H(+) out of the cell. Essential for energy conservation during autotrophic growth. Contributes to ATP synthesis during heterotrophic growth. The polypeptide is Proton-translocating ferredoxin:NAD(+) oxidoreductase complex subunit A (Clostridium ljungdahlii (strain ATCC 55383 / DSM 13528 / PETC)).